The chain runs to 178 residues: Ribonuclease M5 (178 aa).

A Toprim domain is found at 4–100 (NEFIVVEGRD…KIGVEHADLI (97 aa)). Residues Glu10, Asp56, and Asp58 each coordinate Mg(2+).

Belongs to the ribonuclease M5 family. Mg(2+) serves as cofactor.

The protein resides in the cytoplasm. The enzyme catalyses Endonucleolytic cleavage of RNA, removing 21 and 42 nucleotides, respectively, from the 5'- and 3'-termini of a 5S-rRNA precursor.. Required for correct processing of both the 5' and 3' ends of 5S rRNA precursor. Cleaves both sides of a double-stranded region yielding mature 5S rRNA in one step. The polypeptide is Ribonuclease M5 (Staphylococcus aureus (strain NCTC 8325 / PS 47)).